Reading from the N-terminus, the 466-residue chain is GTPase Der (466 aa).

2 EngA-type G domains span residues Pro30 to Ser193 and Arg203 to Asp376. Residues Gly36–Ser43, Asp83–Trp87, Asn145–Asp148, Gly209–Ser216, Asp256–Leu260, and Asn321–Asp324 contribute to the GTP site. A KH-like domain is found at Thr377–Glu459.

The protein belongs to the TRAFAC class TrmE-Era-EngA-EngB-Septin-like GTPase superfamily. EngA (Der) GTPase family. As to quaternary structure, associates with the 50S ribosomal subunit.

Its function is as follows. GTPase that plays an essential role in the late steps of ribosome biogenesis. The sequence is that of GTPase Der from Mycolicibacterium paratuberculosis (strain ATCC BAA-968 / K-10) (Mycobacterium paratuberculosis).